Here is a 258-residue protein sequence, read N- to C-terminus: Malonyl-[acyl-carrier protein] O-methyltransferase (258 aa).

The protein belongs to the methyltransferase superfamily.

The enzyme catalyses malonyl-[ACP] + S-adenosyl-L-methionine = malonyl-[ACP] methyl ester + S-adenosyl-L-homocysteine. It participates in cofactor biosynthesis; biotin biosynthesis. Functionally, converts the free carboxyl group of a malonyl-thioester to its methyl ester by transfer of a methyl group from S-adenosyl-L-methionine (SAM). It allows to synthesize pimeloyl-ACP via the fatty acid synthetic pathway. This chain is Malonyl-[acyl-carrier protein] O-methyltransferase, found in Haemophilus ducreyi (strain 35000HP / ATCC 700724).